Consider the following 743-residue polypeptide: Threonine--tRNA ligase (743 aa).

Over residues 1-15 the composition is skewed to low complexity; it reads MSADSPSSPASSQAA. The tract at residues 1–30 is disordered; the sequence is MSADSPSSPASSQAAEVQVRLPDGSLKTQP. The region spanning 13–76 is the TGS domain; the sequence is QAAEVQVRLP…GEIADDENVV (64 aa). A catalytic region spans residues 264–619; it reads DHRVLGKQHG…LIEHFAGAFP (356 aa). Positions 354–404 are insert; that stretch reads AWSTRLDKDDLSKDDEDKLIAAAEVFGVKLPDYKPSASNDAKKDVLHRWQL. The Zn(2+) site is built by cysteine 416, histidine 467, and histidine 596.

Belongs to the class-II aminoacyl-tRNA synthetase family. As to quaternary structure, homodimer. Zn(2+) is required as a cofactor.

Its subcellular location is the cytoplasm. The catalysed reaction is tRNA(Thr) + L-threonine + ATP = L-threonyl-tRNA(Thr) + AMP + diphosphate + H(+). In terms of biological role, catalyzes the attachment of threonine to tRNA(Thr) in a two-step reaction: L-threonine is first activated by ATP to form Thr-AMP and then transferred to the acceptor end of tRNA(Thr). Also edits incorrectly charged L-seryl-tRNA(Thr). This is Threonine--tRNA ligase from Rhodopirellula baltica (strain DSM 10527 / NCIMB 13988 / SH1).